A 783-amino-acid chain; its full sequence is Polyribonucleotide nucleotidyltransferase 1, mitochondrial (783 aa).

The N-terminal 45 residues, 1–45 (MAACRLCCLCPCLRPLGCGPLGRPGRNRALSYLQMRALWSSTGSR), are a transit peptide targeting the mitochondrion. N6-acetyllysine occurs at positions 250, 264, and 285. An N6-succinyllysine modification is found at lysine 552. The 60-residue stretch at 605–664 (PVVETVKVPLSKRAKFVGPGGYHLKKLQAETGVTISQVDEETFSIFAPTPTAMHEARDFI) folds into the KH domain. In terms of domain architecture, S1 motif spans 679–750 (GAVYTATITE…ADGRMRLSRK (72 aa)). At serine 754 the chain carries Phosphoserine.

It belongs to the polyribonucleotide nucleotidyltransferase family. As to quaternary structure, homotrimer; in free form. Homooligomer. Component of the mitochondrial degradosome (mtEXO) complex which is a heteropentamer containing 2 copies of SUPV3L1 and 3 copies of PNPT1. As part of the mitochondrial degradosome complex, interacts with GRSF1 in an RNA-dependent manner; the interaction enhances the activity of the complex. Interacts with TCL1A; the interaction has no effect on PNPT1 exonuclease activity.

The protein resides in the cytoplasm. It is found in the mitochondrion matrix. It localises to the mitochondrion intermembrane space. It carries out the reaction RNA(n+1) + phosphate = RNA(n) + a ribonucleoside 5'-diphosphate. In terms of biological role, RNA-binding protein implicated in numerous RNA metabolic processes. Catalyzes the phosphorolysis of single-stranded polyribonucleotides processively in the 3'-to-5' direction. Mitochondrial intermembrane factor with RNA-processing exoribonulease activity. Component of the mitochondrial degradosome (mtEXO) complex, that degrades 3' overhang double-stranded RNA with a 3'-to-5' directionality in an ATP-dependent manner. Involved in the degradation of non-coding mitochondrial transcripts (MT-ncRNA) and tRNA-like molecules. Required for correct processing and polyadenylation of mitochondrial mRNAs. Plays a role as a cytoplasmic RNA import factor that mediates the translocation of small RNA components, like the 5S RNA, the RNA subunit of ribonuclease P and the mitochondrial RNA-processing (MRP) RNA, into the mitochondrial matrix. Plays a role in mitochondrial morphogenesis and respiration; regulates the expression of the electron transport chain (ETC) components at the mRNA and protein levels. In the cytoplasm, shows a 3'-to-5' exoribonuclease mediating mRNA degradation activity; degrades c-myc mRNA upon treatment with IFNB1/IFN-beta, resulting in a growth arrest in melanoma cells. Regulates the stability of specific mature miRNAs in melanoma cells; specifically and selectively degrades miR-221, preferentially. Also plays a role in RNA cell surveillance by cleaning up oxidized RNAs. Binds to the RNA subunit of ribonuclease P, MRP RNA and miR-221 microRNA. In Mus musculus (Mouse), this protein is Polyribonucleotide nucleotidyltransferase 1, mitochondrial (Pnpt1).